The primary structure comprises 509 residues: Cytochrome P450 4X1 (509 aa).

A helical membrane pass occupies residues 14–34 (FYLAFVFCLALGLLQAIKLYL). Cys454 contacts heme.

It belongs to the cytochrome P450 family. The cofactor is heme. Expressed in brain, heart, kidney and skin and, at lower levels, in skeletal muscle and liver. In the brain, high levels are detected in amygdala and lower levels in globus pallidus and cerebellum. In the heart, very high levels in aorta, but very low levels in other heart regions. Also expressed in breast, prostate and colon.

It is found in the endoplasmic reticulum membrane. Its subcellular location is the microsome membrane. The enzyme catalyses N-(5Z,8Z,11Z,14Z-eicosatetraenoyl)-ethanolamine + reduced [NADPH--hemoprotein reductase] + O2 = N-(14,15-epoxy-5Z,8Z,11Z-eicosatrienoyl)-ethanolamine + oxidized [NADPH--hemoprotein reductase] + H2O + H(+). In terms of biological role, a cytochrome P450 monooxygenase that selectively catalyzes the epoxidation of the last double bond of the arachidonoyl moiety of anandamide, potentially modulating endocannabinoid signaling. Has no hydroxylase activity toward various fatty acids, steroids and prostaglandins. Mechanistically, uses molecular oxygen inserting one oxygen atom into a substrate, and reducing the second into a water molecule, with two electrons provided by NADPH via cytochrome P450 reductase (CPR; NADPH-ferrihemoprotein reductase). This Homo sapiens (Human) protein is Cytochrome P450 4X1.